Here is a 354-residue protein sequence, read N- to C-terminus: Guanine nucleotide-binding protein G(o) subunit alpha (354 aa).

A lipid anchor (N-myristoyl glycine) is attached at Gly-2. The S-palmitoyl cysteine moiety is linked to residue Cys-3. A G-alpha domain is found at 32–354 (KDIKLLLLGA…ANNLRGCGLY (323 aa)). Residues 35-48 (KLLLLGAGESGKST) are G1 motif. Residues 40–47 (GAGESGKS), 176–182 (LRTRVKT), 201–205 (DVGGQ), 270–273 (NKKD), and Ala-326 each bind GTP. Mg(2+) is bound by residues Ser-47 and Thr-182. The tract at residues 174 to 182 (DILRTRVKT) is G2 motif. Residues 197–206 (FKLFDVGGQR) are G3 motif. The interval 266–273 (ILFLNKKD) is G4 motif. A G5 motif region spans residues 324–329 (TCATDT).

This sequence belongs to the G-alpha family. G(i/o/t/z) subfamily. As to quaternary structure, g proteins are composed of 3 units; alpha, beta and gamma. The alpha chain contains the guanine nucleotide binding site.

Its function is as follows. Guanine nucleotide-binding proteins (G proteins) are involved as modulators or transducers in various transmembrane signaling systems. The G(o) protein function is not clear. The protein is Guanine nucleotide-binding protein G(o) subunit alpha of Locusta migratoria (Migratory locust).